Here is a 395-residue protein sequence, read N- to C-terminus: Membrane glycoprotein spo14 (395 aa).

Residues 1-346 (MAELHLSFPA…KLEDAGVILR (346 aa)) are Cytoplasmic-facing. WD repeat units follow at residues 250–285 (MIRDLKNAKGVTCFCCDKENGMIIVAGADCSIRFMS) and 290–326 (KLSQVYKHSLPVTDMQLSPDSEALVSVSADGLLCLQF). Residues 347 to 367 (LSLMFPFVLAILYFYLQLLFP) traverse the membrane as a helical; Signal-anchor for type II membrane protein segment. The Lumenal segment spans residues 368-395 (DEKLDAIHRFFSFILHIFSKYTIRNYDL).

The protein localises to the endoplasmic reticulum membrane. It is found in the golgi apparatus. It localises to the cis-Golgi network membrane. Required for the formation of transport vesicles from the ER. This function involves the cytoplasmic domain of the protein, which is thought to interact with the small GTP-binding protein sar1. The chain is Membrane glycoprotein spo14 (spo14) from Schizosaccharomyces pombe (strain 972 / ATCC 24843) (Fission yeast).